A 264-amino-acid polypeptide reads, in one-letter code: Thiazole synthase (264 aa).

The active-site Schiff-base intermediate with DXP is the lysine 106. 1-deoxy-D-xylulose 5-phosphate is bound by residues glycine 167, 193–194 (AG), and 215–216 (NS).

The protein belongs to the ThiG family. As to quaternary structure, homotetramer. Forms heterodimers with either ThiH or ThiS.

It localises to the cytoplasm. It catalyses the reaction [ThiS sulfur-carrier protein]-C-terminal-Gly-aminoethanethioate + 2-iminoacetate + 1-deoxy-D-xylulose 5-phosphate = [ThiS sulfur-carrier protein]-C-terminal Gly-Gly + 2-[(2R,5Z)-2-carboxy-4-methylthiazol-5(2H)-ylidene]ethyl phosphate + 2 H2O + H(+). Its pathway is cofactor biosynthesis; thiamine diphosphate biosynthesis. Catalyzes the rearrangement of 1-deoxy-D-xylulose 5-phosphate (DXP) to produce the thiazole phosphate moiety of thiamine. Sulfur is provided by the thiocarboxylate moiety of the carrier protein ThiS. In vitro, sulfur can be provided by H(2)S. This is Thiazole synthase from Pseudomonas savastanoi pv. phaseolicola (strain 1448A / Race 6) (Pseudomonas syringae pv. phaseolicola (strain 1448A / Race 6)).